The primary structure comprises 348 residues: Ion-translocating oxidoreductase complex subunit D (348 aa).

3 helical membrane-spanning segments follow: residues 20 to 39 (VMRL…CYLF), 67 to 87 (YVVS…LIAV), and 124 to 144 (AMVG…NWMA). The residue at position 187 (threonine 187) is an FMN phosphoryl threonine. Transmembrane regions (helical) follow at residues 221 to 241 (WINL…LIPW), 244 to 264 (PVAM…LAPA), 266 to 286 (FAMP…FFII), and 300 to 320 (LVFG…GGYP).

This sequence belongs to the NqrB/RnfD family. As to quaternary structure, the complex is composed of six subunits: RnfA, RnfB, RnfC, RnfD, RnfE and RnfG. The cofactor is FMN.

It is found in the cell inner membrane. Part of a membrane-bound complex that couples electron transfer with translocation of ions across the membrane. The sequence is that of Ion-translocating oxidoreductase complex subunit D from Tolumonas auensis (strain DSM 9187 / NBRC 110442 / TA 4).